The chain runs to 187 residues: Troponin I, slow skeletal muscle (187 aa).

P2 carries the N-acetylproline modification. The interval 2-48 is involved in binding TNC; it reads PEVERKSKITASRKLMLKSLMLAKAKECWEQEHEEREAEKVRYLSER. S58 carries the phosphoserine modification. Residues 97-118 are involved in binding TNC and actin; it reads LKLKVLDLRGKFKRPPLRRVRV.

Belongs to the troponin I family. Binds to actin and tropomyosin.

Functionally, troponin I is the inhibitory subunit of troponin, the thin filament regulatory complex which confers calcium-sensitivity to striated muscle actomyosin ATPase activity. The sequence is that of Troponin I, slow skeletal muscle (Tnni1) from Rattus norvegicus (Rat).